We begin with the raw amino-acid sequence, 315 residues long: MQNRLTIKDIARLSGVGKSTVSRVLNNESGVSQLTRERVEAVMNQHGFSPSRSARAMRGQSDKVVAIIVTRLDSLSENLAVQTMLPAFYEQGYDPIMMESQFSPQLVAEHLGVLKRRNIDGVVLFGFTGITEEMLAHWQSSLVLLARDAKGFASVCYDDEGAIKILMQRLYDQGHRNISYLGVPHSDVTTGKRRHEAYLAFCKAHKLHPVAALPGLAMKQGYENVAKVITPETTALLCATDTLALGASKYLQEQRIDTLQLASVGNTPLMKFLHPEIVTVDPGYAEAGRQAACQLIAQVTGRSEPQQIIIPATLS.

In terms of domain architecture, HTH lacI-type spans 5–59 (LTIKDIARLSGVGKSTVSRVLNNESGVSQLTRERVEAVMNQHGFSPSRSARAMRG). Positions 7–26 (IKDIARLSGVGKSTVSRVLN) form a DNA-binding region, H-T-H motif. Alpha,alpha-trehalose 6-phosphate-binding positions include 71–77 (RLDSLSE), Gly-126, Arg-147, 187–190 (DVTT), Arg-194, Thr-242, and Tyr-284.

Homodimer.

Its function is as follows. Repressor of the treBC operon. It is able to bind trehalose-6-phosphate and trehalose. The protein is HTH-type transcriptional regulator TreR (treR) of Escherichia coli (strain K12).